Here is a 391-residue protein sequence, read N- to C-terminus: Phosphoglycerate kinase (391 aa).

Residues 21–23, Arg-36, 59–62, Arg-113, and Arg-146 contribute to the substrate site; these read DMN and HLGR. Residues Lys-197, Glu-319, and 345–348 contribute to the ATP site; that span reads GGDT.

This sequence belongs to the phosphoglycerate kinase family. As to quaternary structure, monomer.

Its subcellular location is the cytoplasm. The enzyme catalyses (2R)-3-phosphoglycerate + ATP = (2R)-3-phospho-glyceroyl phosphate + ADP. It functions in the pathway carbohydrate degradation; glycolysis; pyruvate from D-glyceraldehyde 3-phosphate: step 2/5. This chain is Phosphoglycerate kinase, found in Chromobacterium violaceum (strain ATCC 12472 / DSM 30191 / JCM 1249 / CCUG 213 / NBRC 12614 / NCIMB 9131 / NCTC 9757 / MK).